The chain runs to 40 residues: uncharacterized protein (40 aa).

An N-terminal signal peptide occupies residues 1–17 (MAVAALAMYGGTCGACA).

This is an uncharacterized protein from Archaeoglobus fulgidus (strain ATCC 49558 / DSM 4304 / JCM 9628 / NBRC 100126 / VC-16).